The following is a 578-amino-acid chain: Arginine--tRNA ligase (578 aa).

Residues 127–137 (PNLAKEMHVGH) carry the 'HIGH' region motif.

It belongs to the class-I aminoacyl-tRNA synthetase family. In terms of assembly, monomer.

It localises to the cytoplasm. It carries out the reaction tRNA(Arg) + L-arginine + ATP = L-arginyl-tRNA(Arg) + AMP + diphosphate. The chain is Arginine--tRNA ligase from Pseudomonas fluorescens (strain Pf0-1).